The following is a 510-amino-acid chain: Cytochrome P450 90D2 (510 aa).

Residues 6–26 (MVGSGGVYSWPAALLVAAIVV) traverse the membrane as a helical segment. Cys-444 contributes to the heme binding site.

It belongs to the cytochrome P450 family. The cofactor is heme.

It is found in the membrane. The catalysed reaction is 3-epi-6-deoxocathasterone + reduced [NADPH--hemoprotein reductase] + O2 = 6-deoxotyphasterol + oxidized [NADPH--hemoprotein reductase] + H2O + H(+). It carries out the reaction (22S,24R)-22-hydroxy-5alpha-ergostan-3-one + reduced [NADPH--hemoprotein reductase] + O2 = 3-dehydro-6-deoxoteasterone + oxidized [NADPH--hemoprotein reductase] + H2O + H(+). It catalyses the reaction 6-deoxycathasterone + reduced [NADPH--hemoprotein reductase] + O2 = 6-deoxoteasterone + oxidized [NADPH--hemoprotein reductase] + H2O + H(+). It functions in the pathway plant hormone biosynthesis; brassinosteroid biosynthesis. Its function is as follows. Involved in reduction steps of the biosynthesis of plant campesterol-derivative steroids, ending to castasterone (CS) but missing brassinolide (BL). Catalyzes the conversion of (22S,24R)-22-hydroxy-5alpha-ergostan-3-one (22-hydroxy-campesta-3-one, 22-OH-3-one) to 3-dehydro-6-deoxoteasterone (6-deoxo3DT, 6-deoxo-3-DHT), 3-epi-6-deoxocathasterone (3-epi-6-deoxoCT) to 6-deoxotyphasterol (6-deoxoTY) and of 6-deoxocathasterone (6-deoxoCT) to 6-deoxoteasterone (6-deoxoTE). In Brachypodium distachyon (Purple false brome), this protein is Cytochrome P450 90D2.